Consider the following 193-residue polypeptide: Thymidine kinase (193 aa).

ATP is bound by residues 9-16 and 87-90; these read STMNAGKS and DEAN. The active-site Proton acceptor is Glu88. Zn(2+) contacts are provided by Cys145, Cys147, Cys182, and His185.

Belongs to the thymidine kinase family. Homotetramer.

The protein localises to the cytoplasm. It carries out the reaction thymidine + ATP = dTMP + ADP + H(+). The sequence is that of Thymidine kinase from Agrobacterium fabrum (strain C58 / ATCC 33970) (Agrobacterium tumefaciens (strain C58)).